A 416-amino-acid chain; its full sequence is UDP-N-acetylglucosamine 1-carboxyvinyltransferase (416 aa).

22-23 (KN) provides a ligand contact to phosphoenolpyruvate. A UDP-N-acetyl-alpha-D-glucosamine-binding site is contributed by R91. The active-site Proton donor is the C115. A 2-(S-cysteinyl)pyruvic acid O-phosphothioketal modification is found at C115. UDP-N-acetyl-alpha-D-glucosamine-binding positions include 120–124 (RPIDL), D305, and I327.

Belongs to the EPSP synthase family. MurA subfamily.

The protein resides in the cytoplasm. The catalysed reaction is phosphoenolpyruvate + UDP-N-acetyl-alpha-D-glucosamine = UDP-N-acetyl-3-O-(1-carboxyvinyl)-alpha-D-glucosamine + phosphate. It functions in the pathway cell wall biogenesis; peptidoglycan biosynthesis. Functionally, cell wall formation. Adds enolpyruvyl to UDP-N-acetylglucosamine. In Buchnera aphidicola subsp. Acyrthosiphon pisum (strain APS) (Acyrthosiphon pisum symbiotic bacterium), this protein is UDP-N-acetylglucosamine 1-carboxyvinyltransferase.